A 653-amino-acid chain; its full sequence is uncharacterized protein (653 aa).

The next 2 membrane-spanning stretches (helical) occupy residues 39–59 (AMTT…LKLI) and 207–227 (AVFV…AFTI). The region spanning 225-277 (FTITKPIRELLTGVKNIASGDFHQRISLPFGGELGALIFNFNEMAERLEKYEQ) is the HAMP domain. One can recognise a PAS domain in the interval 286 to 356 (EKAKLETLVS…PALNDIVRKN (71 aa)). One can recognise a Histidine kinase domain in the interval 421-651 (NVSHELRTPL…CFFFDLIIAK (231 aa)). H424 is modified (phosphohistidine; by autocatalysis).

The protein localises to the plastid. The protein resides in the chloroplast membrane. The enzyme catalyses ATP + protein L-histidine = ADP + protein N-phospho-L-histidine.. This is an uncharacterized protein from Pyropia yezoensis (Susabi-nori).